The following is a 61-amino-acid chain: Acetylcholinesterase toxin C (61 aa).

4 cysteine pairs are disulfide-bonded: Cys-3-Cys-22, Cys-17-Cys-39, Cys-41-Cys-52, and Cys-53-Cys-59.

Belongs to the three-finger toxin family. Short-chain subfamily. Acn-esterase inhibitor sub-subfamily. In terms of tissue distribution, expressed by the venom gland.

It is found in the secreted. Its function is as follows. Inhibits acetylcholinesterase. The sequence is that of Acetylcholinesterase toxin C from Dendroaspis polylepis polylepis (Black mamba).